Here is a 498-residue protein sequence, read N- to C-terminus: Dynein regulatory complex subunit 2 (498 aa).

3 coiled-coil regions span residues 98–160, 250–311, and 417–441; these read VIKS…RKTI, KDEK…KAQR, and SLRH…QYLD.

The protein belongs to the DRC2 family. Component of the nexin-dynein regulatory complex (N-DRC). Interacts with DRC1.

The protein resides in the cytoplasm. It is found in the cytoskeleton. Its subcellular location is the flagellum basal body. It localises to the cell projection. The protein localises to the cilium. The protein resides in the flagellum. It is found in the flagellum axoneme. Its function is as follows. Component of the nexin-dynein regulatory complex (N-DRC), a key regulator of ciliary/flagellar motility which maintains the alignment and integrity of the distal axoneme and regulates microtubule sliding in motile axonemes. Plays a critical role in the assembly of N-DRC and also stabilizes the assembly of multiple inner dynein arms and radial spokes. Coassembles with DRC1 to form a central scaffold needed for assembly of the N-DRC and its attachment to the outer doublet microtubules. This is Dynein regulatory complex subunit 2 (CCDC65) from Bos taurus (Bovine).